A 991-amino-acid chain; its full sequence is Seizure protein 6 (991 aa).

Residues 1–19 form the signal peptide; that stretch reads MRPAALLLLPSLLALLAHG. The Extracellular portion of the chain corresponds to 20–922; that stretch reads LSSEAPITGE…AASSALDAAH (903 aa). The disordered stretch occupies residues 79–193; sequence EGLEREEAPQ…QEGPGDMDRP (115 aa). Low complexity predominate over residues 119 to 132; sequence TSPTPAVAAAPTQP. The span at 175-184 shows a compositional bias: polar residues; the sequence is PPSQAWTPTQ. Cys241 and Cys268 form a disulfide bridge. A CUB 1 domain is found at 241–353; sequence CSWNFSGPEG…HFRYQAYLLS (113 aa). N-linked (GlcNAc...) asparagine glycosylation occurs at Asn286. The region spanning 352-411 is the Sushi 1 domain; it reads LSCHFPRRPAYGDVTVTSLHPGGSAHFHCATGYQLKGARFLTCLNATQPFWDSQEPVCIA. 12 disulfides stabilise this stretch: Cys354-Cys394, Cys380-Cys409, Cys413-Cys440, Cys529-Cys571, Cys556-Cys586, Cys590-Cys616, Cys707-Cys749, Cys735-Cys762, Cys768-Cys810, Cys796-Cys827, Cys835-Cys877, and Cys863-Cys892. 3 N-linked (GlcNAc...) asparagine glycosylation sites follow: Asn396, Asn433, and Asn538. Residues 413-524 enclose the CUB 2 domain; it reads CGGVIRNATT…AGMALRYEAF (112 aa). In terms of domain architecture, Sushi 2 spans 527-588; the sequence is GHCYEPFVKY…WNETEPACRA (62 aa). Residues 590–701 enclose the CUB 3 domain; it reads CSGEITDSAG…QGFVIHFFEV (112 aa). Sushi domains lie at 705-764, 766-829, and 833-894; these read DTCP…SCQR, TSCH…KCLL, and KPCH…ICRA. Residues 923 to 943 form a helical membrane-spanning segment; the sequence is LAAAIFLPLVAMVLLVGGVYL. The Cytoplasmic segment spans residues 944–991; the sequence is YFSRFQGKSPLQLPRTHPRPYNRITVESAFDNPTYETGSLSFAGDERI.

This sequence belongs to the SEZ6 family. In terms of processing, glycosylated. As to expression, brain-specific. Expressed in extrasynaptic and synaptic subcellular fractions (at protein level). Expression correlates with the most active periods of cortical neurogenesis and neuronal maturation. Expression is restricted to the gray matter with higher levels in the forebrain including the olfactory bulb, anterior olfactory nuclei, olfactory tubercle, striatum, hippocampal CA1 pyramidal cell layer and cerebral cortex. Expression is up-regulated with the convulsant drug, pentylenetetrazole.

Its subcellular location is the cell membrane. The protein localises to the cell projection. The protein resides in the dendrite. It localises to the synapse. It is found in the secreted. Its subcellular location is the cytoplasm. Functionally, may play a role in cell-cell recognition and in neuronal membrane signaling. Seems to be important for the achievement of the necessary balance between dendrite elongation and branching during the elaboration of a complex dendritic arbor. Involved in the development of appropriate excitatory synaptic connectivity. This chain is Seizure protein 6 (Sez6), found in Mus musculus (Mouse).